The primary structure comprises 544 residues: CTP synthase (544 aa).

The amidoligase domain stretch occupies residues 1-265; sequence MARFIFITGG…DEAVLSAFGI (265 aa). Residue serine 13 participates in CTP binding. Residue serine 13 participates in UTP binding. An ATP-binding site is contributed by 14–19; that stretch reads SLGKGL. Tyrosine 54 is a binding site for L-glutamine. Residue aspartate 71 participates in ATP binding. Residues aspartate 71 and glutamate 139 each coordinate Mg(2+). CTP contacts are provided by residues 146–148, 186–191, and lysine 222; these read DIE and KTKPTQ. UTP is bound by residues 186–191 and lysine 222; that span reads KTKPTQ. A Glutamine amidotransferase type-1 domain is found at 291-543; sequence TIGVVGKYVG…IAAALQQSRL (253 aa). Residue glycine 355 participates in L-glutamine binding. Cysteine 382 (nucleophile; for glutamine hydrolysis) is an active-site residue. Residues 383-386, glutamate 406, and arginine 471 each bind L-glutamine; that span reads LGMQ. Active-site residues include histidine 516 and glutamate 518.

Belongs to the CTP synthase family. In terms of assembly, homotetramer.

The catalysed reaction is UTP + L-glutamine + ATP + H2O = CTP + L-glutamate + ADP + phosphate + 2 H(+). It carries out the reaction L-glutamine + H2O = L-glutamate + NH4(+). It catalyses the reaction UTP + NH4(+) + ATP = CTP + ADP + phosphate + 2 H(+). It functions in the pathway pyrimidine metabolism; CTP biosynthesis via de novo pathway; CTP from UDP: step 2/2. Allosterically activated by GTP, when glutamine is the substrate; GTP has no effect on the reaction when ammonia is the substrate. The allosteric effector GTP functions by stabilizing the protein conformation that binds the tetrahedral intermediate(s) formed during glutamine hydrolysis. Inhibited by the product CTP, via allosteric rather than competitive inhibition. Catalyzes the ATP-dependent amination of UTP to CTP with either L-glutamine or ammonia as the source of nitrogen. Regulates intracellular CTP levels through interactions with the four ribonucleotide triphosphates. The sequence is that of CTP synthase from Rhizorhabdus wittichii (strain DSM 6014 / CCUG 31198 / JCM 15750 / NBRC 105917 / EY 4224 / RW1) (Sphingomonas wittichii).